We begin with the raw amino-acid sequence, 382 residues long: Mannitol-1-phosphate 5-dehydrogenase (382 aa).

3 to 14 provides a ligand contact to NAD(+); that stretch reads ALHFGAGNIGRG. An N6-acetyllysine modification is found at lysine 269.

This sequence belongs to the mannitol dehydrogenase family.

It carries out the reaction D-mannitol 1-phosphate + NAD(+) = beta-D-fructose 6-phosphate + NADH + H(+). The sequence is that of Mannitol-1-phosphate 5-dehydrogenase from Escherichia coli O9:H4 (strain HS).